The primary structure comprises 344 residues: Cinnamoyl-CoA reductase 1 (344 aa).

S7 is subject to Phosphoserine. NADP(+) contacts are provided by residues 17–23 (GAGGYIA), R42, K48, 68–69 (DL), 88–90 (TAS), Y161, K165, 188–191 (PVLV), and S203. A disulfide bridge connects residues C154 and C162. The active-site Proton donor is the K165. Positions 317–344 (QEKGHLAPPPPPPSASQESVENGIKIGS) are disordered.

The protein belongs to the NAD(P)-dependent epimerase/dehydratase family. Dihydroflavonol-4-reductase subfamily. Expressed in leaves, stems and flowers.

It carries out the reaction (E)-cinnamaldehyde + NADP(+) + CoA = (E)-cinnamoyl-CoA + NADPH + H(+). The protein operates within aromatic compound metabolism; phenylpropanoid biosynthesis. Involved in the latter stages of lignin biosynthesis. Catalyzes one of the last steps of monolignol biosynthesis, the conversion of cinnamoyl-CoAs into their corresponding cinnamaldehydes. This Arabidopsis thaliana (Mouse-ear cress) protein is Cinnamoyl-CoA reductase 1.